The sequence spans 380 residues: Chaperone protein DnaJ (380 aa).

One can recognise a J domain in the interval 6–71 (DYYAILEVSR…QKRAAYDQYG (66 aa)). A CR-type zinc finger spans residues 136–215 (GVKKDVRVIT…CHGEGTVEKE (80 aa)). Zn(2+) contacts are provided by C149, C152, C167, C170, C189, C192, C203, and C206. CXXCXGXG motif repeat units follow at residues 149-156 (CEACHGTG), 167-174 (CPSCHGAG), 189-196 (CPTCHGAG), and 203-210 (CKVCHGEG).

This sequence belongs to the DnaJ family. As to quaternary structure, homodimer. Zn(2+) is required as a cofactor.

It is found in the cytoplasm. Functionally, participates actively in the response to hyperosmotic and heat shock by preventing the aggregation of stress-denatured proteins and by disaggregating proteins, also in an autonomous, DnaK-independent fashion. Unfolded proteins bind initially to DnaJ; upon interaction with the DnaJ-bound protein, DnaK hydrolyzes its bound ATP, resulting in the formation of a stable complex. GrpE releases ADP from DnaK; ATP binding to DnaK triggers the release of the substrate protein, thus completing the reaction cycle. Several rounds of ATP-dependent interactions between DnaJ, DnaK and GrpE are required for fully efficient folding. Also involved, together with DnaK and GrpE, in the DNA replication of plasmids through activation of initiation proteins. In Acetobacter pasteurianus (strain NBRC 105184 / IFO 3283-01), this protein is Chaperone protein DnaJ.